Reading from the N-terminus, the 93-residue chain is uncharacterized protein (93 aa).

Residues 26 to 73 (NRGTIFRPMTRNSGIVGRRGGPVAPAPFRNNVQKPGTRPPGFKPPSGV) form a disordered region.

This is an uncharacterized protein from Caenorhabditis elegans.